We begin with the raw amino-acid sequence, 786 residues long: Constitutive coactivator of peroxisome proliferator-activated receptor gamma (786 aa).

Residues 1–561 (MGVRGLQGFV…GTPSLEVLWL (561 aa)) form a mediates transactivation of PPARG region. Disordered regions lie at residues 371–413 (PNQE…KLPS) and 738–786 (HWDS…WRRY). A compositionally biased stretch (polar residues) spans 750 to 771 (QGYSSYRTDSTHGHSGQSWRNQ).

The protein belongs to the constitutive coactivator of PPAR-gamma family. In terms of assembly, interacts with ESR1 and RXRA. Interacts with PPARG; in a ligand-independent manner. Ubiquitously expressed (at protein level).

The protein resides in the nucleus. Its function is as follows. Functions as a transactivator of PPARG and ESR1. Functions in adipogenesis through PPARG activation. This Mus musculus (Mouse) protein is Constitutive coactivator of peroxisome proliferator-activated receptor gamma (Fam120b).